Reading from the N-terminus, the 846-residue chain is Rho GTPase-activating protein 17 (846 aa).

Residues 14–246 (QTVGRAEKTE…MRAHQDKWAE (233 aa)) form the BAR domain. Residues 252–442 (TPLEEHLKRS…PIIQHADWFF (191 aa)) form the Rho-GAP domain. Positions 459 to 475 (TPNSNHSSHTGNDSDSG) are enriched in polar residues. The tract at residues 459–482 (TPNSNHSSHTGNDSDSGTLERKRP) is disordered. Residues Ser-484 and Ser-575 each carry the phosphoserine modification. The interval 519 to 807 (IAPAFQPPLP…ASRIVTDTNS (289 aa)) is disordered. The segment covering 592–619 (RNSNQMTTVPNQAQTGGNSHQLSVSTPH) has biased composition (polar residues). Over residues 637–650 (APAPPKPGNLPPGH) the composition is skewed to pro residues. Residues 653-690 (GQSSPGTGTSPKPSARSPSPPQQQQQQQQQQQQQQQQQ) are compositionally biased toward low complexity. Phosphoserine occurs at positions 698 and 700. 2 stretches are compositionally biased toward pro residues: residues 704 to 717 (IQAP…PPTQ) and 726 to 741 (EPGP…PSTP). Residues Thr-730, Thr-734, and Thr-736 each carry the phosphothreonine modification. The SH3-binding signature appears at 730–743 (TPPQTPTPPSTPPL). Ser-739 carries the phosphoserine modification. Residue Thr-740 is modified to Phosphothreonine. Positions 746-757 (QNPSQSETTQLH) are enriched in polar residues. Pro residues predominate over residues 772–782 (RPSVPPPPHPP). The segment covering 791-807 (LTSSVPTASRIVTDTNS) has biased composition (polar residues).

Component of a complex whose core is composed of ARHGAP17, AMOT, PALS1, PATJ and PARD3/PAR3. Interacts with NHERF1, FNBP1, TRIP10, CAPZA (CAPZA1, CAPZA2 or CAPZA3), CAPZB, CD2AP and SH3KBP1/CIN85.

It localises to the membrane. The protein localises to the cytoplasm. Its subcellular location is the cell junction. The protein resides in the tight junction. Rho GTPase-activating protein involved in the maintenance of tight junction by regulating the activity of CDC42, thereby playing a central role in apical polarity of epithelial cells. Specifically acts as a GTPase activator for the CDC42 GTPase by converting it to an inactive GDP-bound state. The complex formed with AMOT acts by regulating the uptake of polarity proteins at tight junctions, possibly by deciding whether tight junction transmembrane proteins are recycled back to the plasma membrane or sent elsewhere. Participates in the Ca(2+)-dependent regulation of exocytosis, possibly by catalyzing GTPase activity of Rho family proteins and by inducing the reorganization of the cortical actin filaments. Acts as a GTPase activator in vitro for RAC1. This Mus musculus (Mouse) protein is Rho GTPase-activating protein 17 (Arhgap17).